The primary structure comprises 349 residues: Phloroglucinol synthase (349 aa).

Residue Cys138 is part of the active site.

It belongs to the thiolase-like superfamily. Chalcone/stilbene synthases family.

The enzyme catalyses 3 malonyl-CoA + 3 H(+) = 1,3,5-trihydroxybenzene + 3 CO2 + 3 CoA. Its pathway is antibiotic biosynthesis. Functionally, type III polyketide synthase that catalyzes the synthesis of phloroglucinol from three molecules of malonyl-CoA. In addition to its ability to produce phloroglucinol from malonyl-CoA, it exhibits broad substrate specificity, accepting C4-C12 aliphatic acyl-CoAs and phenylacetyl-CoA as the starters to form C6-polyoxoalkylated alpha-pyrones from sequential condensation with malonyl-CoA. The chain is Phloroglucinol synthase from Pseudomonas fluorescens (strain ATCC BAA-477 / NRRL B-23932 / Pf-5).